The following is a 1677-amino-acid chain: Zinc finger protein 831 (1677 aa).

Positions 1 to 26 (MEVPEPTCPAPPARDQPAPTPGPPGA) are enriched in pro residues. Residues 1–43 (MEVPEPTCPAPPARDQPAPTPGPPGAPGGQASPHLTLGPVLLP) are disordered. C2H2-type zinc fingers lie at residues 144–166 (YLCP…IRSH) and 172–196 (FPCA…TQTH). 10 disordered regions span residues 193-250 (TQTH…SPGA), 270-398 (GSAF…AGLE), 516-557 (WLEP…PSGH), 663-931 (EAAG…VLSA), 950-1062 (TPLP…TCEA), 1100-1119 (NWEL…SGPL), 1137-1176 (LTRP…PFPS), 1216-1243 (LRDE…GPAQ), 1510-1597 (SAES…GQYG), and 1620-1677 (LITR…VIEI). Composition is skewed to basic and acidic residues over residues 216–232 (EGDK…RGES) and 325–341 (KPWD…KCES). Residues 376 to 385 (EGGPGPGPGV) are compositionally biased toward gly residues. The stretch at 391 to 423 (GAREAGLELEKKRLEERIAQLISHNQAVVDDAQ) forms a coiled coil. Composition is skewed to basic and acidic residues over residues 517-526 (LEPREPRDPW), 674-684 (QDRRTPVHEDI), 707-727 (PTKH…RVEE), and 813-834 (SGED…HSWK). Composition is skewed to low complexity over residues 880-894 (LESS…SVAL) and 905-919 (PLHP…HPSL). The span at 1153–1170 (SSHSGTSRSHSTRSPHST) shows a compositional bias: low complexity. Positions 1518-1531 (QTAGRTLTSSSPDS) are enriched in polar residues. Basic and acidic residues predominate over residues 1649 to 1662 (RSLEGMRKQTRVEF).

The protein is Zinc finger protein 831 (ZNF831) of Homo sapiens (Human).